The primary structure comprises 408 residues: Histidine--tRNA ligase (408 aa).

It belongs to the class-II aminoacyl-tRNA synthetase family. As to quaternary structure, homodimer.

It is found in the cytoplasm. It catalyses the reaction tRNA(His) + L-histidine + ATP = L-histidyl-tRNA(His) + AMP + diphosphate + H(+). The chain is Histidine--tRNA ligase from Campylobacter lari (strain RM2100 / D67 / ATCC BAA-1060).